Consider the following 209-residue polypeptide: Scoloptoxin SSD346 (209 aa).

The first 22 residues, 1-22 (NILLSSTLFVLLMFQIIGSGLG), serve as a signal peptide directing secretion.

Post-translationally, contains 2 disulfide bonds. Expressed by the venom gland.

It is found in the secreted. May act as a voltage-gated calcium channel inhibitor. The polypeptide is Scoloptoxin SSD346 (Scolopendra dehaani (Thai centipede)).